The following is a 183-amino-acid chain: Threonylcarbamoyl-AMP synthase (183 aa).

Positions 1–183 (MELAQIVERL…IFSRQIFRRG (183 aa)) constitute a YrdC-like domain.

This sequence belongs to the SUA5 family. TsaC subfamily.

The protein resides in the cytoplasm. It catalyses the reaction L-threonine + hydrogencarbonate + ATP = L-threonylcarbamoyladenylate + diphosphate + H2O. In terms of biological role, required for the formation of a threonylcarbamoyl group on adenosine at position 37 (t(6)A37) in tRNAs that read codons beginning with adenine. Catalyzes the conversion of L-threonine, HCO(3)(-)/CO(2) and ATP to give threonylcarbamoyl-AMP (TC-AMP) as the acyladenylate intermediate, with the release of diphosphate. The chain is Threonylcarbamoyl-AMP synthase from Mannheimia succiniciproducens (strain KCTC 0769BP / MBEL55E).